The sequence spans 131 residues: Antileukoproteinase (131 aa).

The signal sequence occupies residues 1-25 (MKSCGLLPFTVLLALGILAPWTVEG). WAP domains are found at residues 29–77 (DAIK…VNPV) and 83–131 (VWRK…LPPM). 8 cysteine pairs are disulfide-bonded: cysteine 36-cysteine 65, cysteine 44-cysteine 69, cysteine 52-cysteine 64, cysteine 58-cysteine 73, cysteine 90-cysteine 119, cysteine 97-cysteine 123, cysteine 106-cysteine 118, and cysteine 112-cysteine 127. Residues 85 to 131 (RKPGRCVKTQARCMMLNPPNVCQRDGQCDGKYKCCEGICGKVCLPPM) form an elastase inhibitory domain region.

In terms of assembly, interacts with GRN; interaction protects progranulin from proteolysis. As to expression, detected in bronchial epithelial cells. Detected in bronchoalveolar fluid after infection with M.tuberculosis (at protein level). Highest expression in lung, spleen, intestine and epididymis with lower levels in liver and seminal vesicle. No expression in brain, heart, kidney and muscle.

The protein localises to the secreted. In terms of biological role, acid-stable proteinase inhibitor with strong affinities for trypsin, chymotrypsin, elastase, and cathepsin G. Modulates the innate immune response after bacterial infection. Contributes to regulate the inflammatory and immune responses to the intracellular parasite L.major. Down-regulates responses to bacterial lipopolysaccharide (LPS). Plays a role in regulating the activation of NF-kappa-B and inflammatory responses. Has antimicrobial activity against mycobacteria, but not against salmonella. Contributes to normal resistance against infection by M.tuberculosis. Required for normal resistance to L.major. Required for normal wound healing, probably by preventing tissue damage by limiting protease activity. Together with ELANE, required for normal differentiation and proliferation of bone marrow myeloid cells. In Mus musculus (Mouse), this protein is Antileukoproteinase (Slpi).